The following is a 432-amino-acid chain: Solute carrier family 35 member F5 (432 aa).

An N-terminal signal peptide occupies residues methionine 1 to glycine 33. Serine 116 carries the post-translational modification Phosphoserine. 8 helical membrane-spanning segments follow: residues isoleucine 152–serine 172, alanine 177–phenylalanine 197, phenylalanine 205–leucine 225, threonine 236–isoleucine 256, methionine 270–leucine 290, valine 304–tryptophan 324, phenylalanine 329–isoleucine 349, and tryptophan 361–cysteine 381. One can recognise an EamA domain in the interval phenylalanine 161–leucine 225.

Belongs to the SLC35F solute transporter family.

It is found in the membrane. Functionally, putative solute transporter. The polypeptide is Solute carrier family 35 member F5 (SLC35F5) (Macaca fascicularis (Crab-eating macaque)).